The sequence spans 238 residues: 15,16-dihydrobiliverdin:ferredoxin oxidoreductase (238 aa).

The protein belongs to the HY2 family.

It catalyses the reaction 15,16-dihydrobiliverdin + oxidized 2[4Fe-4S]-[ferredoxin] = biliverdin IXalpha + reduced 2[4Fe-4S]-[ferredoxin] + 2 H(+). Functionally, catalyzes the two-electron reduction of biliverdin IX-alpha at the C15 methine bridge. The protein is 15,16-dihydrobiliverdin:ferredoxin oxidoreductase of Prochlorococcus marinus (strain MIT 9211).